The sequence spans 406 residues: Argininosuccinate synthase (406 aa).

Residues 10–18 and alanine 37 each bind ATP; that span reads AYSGGLDTS. Tyrosine 88 and serine 93 together coordinate L-citrulline. ATP is bound at residue glycine 118. Residues threonine 120, asparagine 124, and aspartate 125 each contribute to the L-aspartate site. An L-citrulline-binding site is contributed by asparagine 124. Residues arginine 128, serine 179, serine 188, glutamate 264, and tyrosine 276 each contribute to the L-citrulline site.

It belongs to the argininosuccinate synthase family. Type 1 subfamily. As to quaternary structure, homotetramer.

Its subcellular location is the cytoplasm. The enzyme catalyses L-citrulline + L-aspartate + ATP = 2-(N(omega)-L-arginino)succinate + AMP + diphosphate + H(+). Its pathway is amino-acid biosynthesis; L-arginine biosynthesis; L-arginine from L-ornithine and carbamoyl phosphate: step 2/3. This Azotobacter vinelandii (strain DJ / ATCC BAA-1303) protein is Argininosuccinate synthase.